A 184-amino-acid polypeptide reads, in one-letter code: Acetyl-CoA decarbonylase/synthase complex subunit epsilon 1 (184 aa).

Belongs to the CdhB family. In terms of assembly, heterotetramer of two alpha and two epsilon subunits. The ACDS complex is made up of alpha, epsilon, beta, gamma and delta subunits with a probable stoichiometry of (alpha(2)epsilon(2))(4)-beta(8)-(gamma(1)delta(1))(8).

Its function is as follows. Part of a complex that catalyzes the reversible cleavage of acetyl-CoA, allowing autotrophic growth from CO(2). The alpha-epsilon subcomponent functions as a carbon monoxide dehydrogenase. The precise role of the epsilon subunit is unclear; it may have a stabilizing role within the alpha(2)epsilon(2) component and/or be involved in electron transfer to FAD during a potential FAD-mediated CO oxidation. The chain is Acetyl-CoA decarbonylase/synthase complex subunit epsilon 1 (cdhB1) from Archaeoglobus fulgidus (strain ATCC 49558 / DSM 4304 / JCM 9628 / NBRC 100126 / VC-16).